The primary structure comprises 58 residues: Light-harvesting protein B-875 alpha chain (58 aa).

At methionine 1–arginine 15 the chain is on the cytoplasmic side. The helical transmembrane segment at valine 16–leucine 36 threads the bilayer. Residue histidine 32 coordinates a bacteriochlorophyll. Over serine 37 to glutamate 58 the chain is Periplasmic.

The protein belongs to the antenna complex alpha subunit family. The core complex is formed by different alpha and beta chains, binding bacteriochlorophyll molecules, and arranged most probably in tetrameric structures disposed around the reaction center. The non-pigmented gamma chains may constitute additional components.

Its subcellular location is the cell inner membrane. Antenna complexes are light-harvesting systems, which transfer the excitation energy to the reaction centers. This is Light-harvesting protein B-875 alpha chain (pufA) from Cereibacter sphaeroides (strain ATCC 17023 / DSM 158 / JCM 6121 / CCUG 31486 / LMG 2827 / NBRC 12203 / NCIMB 8253 / ATH 2.4.1.) (Rhodobacter sphaeroides).